A 163-amino-acid chain; its full sequence is Cytosolic iron-sulfur assembly component 2B (163 aa).

Belongs to the MIP18 family. Component of the CIA complex. Component of the MMXD complex, which includes CIAO1, ERCC2, CIAO2B, MMS19 and SLC25A5. Interacts with CIAO1, ERCC2 and MMS19; the interactions are direct. Interacts with KIF4A; the interaction facilitates the transfer of Fe-S clusters to KIF4A to ensure proper localization of KIF4A to the mitotic machinery. Interacts with CCDC117; the interaction is direct.

The protein localises to the nucleus. It is found in the cytoplasm. Its subcellular location is the cytoskeleton. The protein resides in the spindle. In terms of biological role, component of the cytosolic iron-sulfur protein assembly (CIA) complex, a multiprotein complex that mediates the incorporation of iron-sulfur cluster into extramitochondrial Fe/S proteins. As a CIA complex component and in collaboration with CIAO1 and MMS19, binds to and facilitates the assembly of most cytosolic-nuclear Fe/S proteins. As part of the mitotic spindle-associated MMXD complex it plays a role in chromosome segregation, probably by facilitating iron-sulfur cluster assembly into ERCC2/XPD. Together with MMS19, facilitates the transfer of Fe-S clusters to the motor protein KIF4A, which ensures proper localization of KIF4A to mitotic machinery components to promote the progression of mitosis. This is Cytosolic iron-sulfur assembly component 2B from Mus musculus (Mouse).